The chain runs to 76 residues: Exodeoxyribonuclease 7 small subunit (76 aa).

It belongs to the XseB family. As to quaternary structure, heterooligomer composed of large and small subunits.

Its subcellular location is the cytoplasm. It carries out the reaction Exonucleolytic cleavage in either 5'- to 3'- or 3'- to 5'-direction to yield nucleoside 5'-phosphates.. Functionally, bidirectionally degrades single-stranded DNA into large acid-insoluble oligonucleotides, which are then degraded further into small acid-soluble oligonucleotides. The polypeptide is Exodeoxyribonuclease 7 small subunit (Gluconacetobacter diazotrophicus (strain ATCC 49037 / DSM 5601 / CCUG 37298 / CIP 103539 / LMG 7603 / PAl5)).